The following is a 374-amino-acid chain: Pyruvate dehydrogenase E1 component subunit beta-1, mitochondrial (374 aa).

The transit peptide at 1-34 (MLGIARRRLGSGCALGQLMQALRPAAAAAAARTY) directs the protein to the mitochondrion. Residue E97 participates in thiamine diphosphate binding. Residues I150, A198, I199, and D201 each contribute to the K(+) site.

As to quaternary structure, tetramer of 2 alpha and 2 beta subunits. Requires thiamine diphosphate as cofactor.

The protein resides in the mitochondrion matrix. The catalysed reaction is N(6)-[(R)-lipoyl]-L-lysyl-[protein] + pyruvate + H(+) = N(6)-[(R)-S(8)-acetyldihydrolipoyl]-L-lysyl-[protein] + CO2. Functionally, the pyruvate dehydrogenase complex catalyzes the overall conversion of pyruvate to acetyl-CoA and CO(2). It contains multiple copies of three enzymatic components: pyruvate dehydrogenase (E1), dihydrolipoamide acetyltransferase (E2) and lipoamide dehydrogenase (E3). The sequence is that of Pyruvate dehydrogenase E1 component subunit beta-1, mitochondrial from Oryza sativa subsp. japonica (Rice).